Consider the following 1265-residue polypeptide: Guanine nucleotide exchange factor SDC25 (1265 aa).

The region spanning 26–97 is the SH3 domain; it reads QPIDVVECTY…PPSFTRSILN (72 aa). Disordered regions lie at residues 409 to 454 and 623 to 648; these read IPAS…DTIW and LNLDNAKDKKNGSQNTDIQEEEDEYE. Low complexity predominate over residues 416 to 428; sequence TSCSSETSHHSPS. An N-terminal Ras-GEF domain is found at 782-914; sequence SNNRIKGGSK…LLKEVNQKFK (133 aa). Residues 952–1199 form the Ras-GEF domain; it reads DPVLFATQLT…YQLSLIIEPK (248 aa). The segment at 1201–1252 is disordered; it reads RKKVVPNSNSNNKSQEKSRDDQTDEGKTSTKKDRFSKFQLHKTKKKAPKVSK. Basic and acidic residues predominate over residues 1214–1236; it reads SQEKSRDDQTDEGKTSTKKDRFS. The span at 1239 to 1252 shows a compositional bias: basic residues; that stretch reads QLHKTKKKAPKVSK.

Promotes the exchange of Ras-bound GDP by GTP. The protein is Guanine nucleotide exchange factor SDC25 (SDC25) of Saccharomyces cerevisiae (strain AWRI1631) (Baker's yeast).